We begin with the raw amino-acid sequence, 554 residues long: Intraflagellar transport protein 56 (554 aa).

Positions M1–G24 are disordered. TPR repeat units follow at residues E57–N90, E92–R125, T151–Y184, and A468–R501.

The protein belongs to the IFT56 family. Component of the IFT complex B. Interacts with IFT46; the interaction is direct.

The protein resides in the cell projection. The protein localises to the cilium. In terms of biological role, component of the intraflagellar transport (IFT) complex B required for transport of proteins in the motile cilium. Required for transport of specific ciliary cargo proteins related to motility, while it is neither required for IFT complex B assembly or motion nor for cilium assembly. Required for efficient coupling between the accumulation of GLI2 and GLI3 at the ciliary tips and their dissociation from the negative regulator SUFU. Plays a key role in maintaining the integrity of the IFT complex B and the proper ciliary localization of the IFT complex B components. Not required for IFT complex A ciliary localization or function. Essential for maintaining proper microtubule organization within the ciliary axoneme. The sequence is that of Intraflagellar transport protein 56 from Homo sapiens (Human).